The sequence spans 374 residues: Fe(2+) transport protein 1 (374 aa).

The first 33 residues, 1 to 33 (MATPRTLVPILPPVAALLLLLVAASSIPILAAA), serve as a signal peptide directing secretion. The Extracellular segment spans residues 34-62 (QPADACGGAPDQAAADGACHDVPRALRLK). Residues 63–83 (LIAIPTILVSSVVGVCLPLLS) traverse the membrane as a helical segment. The Cytoplasmic portion of the chain corresponds to 84–92 (RSVPALRPD). A helical membrane pass occupies residues 93 to 113 (GGLFAVVKAFASGVILATGYM). Topologically, residues 114–137 (HVLPDAFNNLTSPCLPRKPWSEFP) are extracellular. A helical membrane pass occupies residues 138–158 (FAAFVAMLAAVSTLMADSLML). Over 159–219 (TYYNRSKPRP…ATQVQLRRNR (61 aa)) the chain is Cytoplasmic. The segment at 166–199 (PRPSSGGDVAAVADHGESPDQGHRHGHGHGHGHG) is disordered. Residues 179–188 (DHGESPDQGH) show a composition bias toward basic and acidic residues. Residues 220–240 (VVVQVLEIGIVVHSVVIGLGM) form a helical membrane-spanning segment. At 241 to 251 (GASQNVCTIRP) the chain is on the extracellular side. The helical transmembrane segment at 252–272 (LVAAMCFHQMFEGMGLGGCIL) threads the bilayer. Residues 273-282 (QAEYGRRMRS) lie on the Cytoplasmic side of the membrane. The chain crosses the membrane as a helical span at residues 283-303 (VLVFFFSTTTPFGIALGLALT). Residues 304 to 313 (RVYRDNSPTA) lie on the Extracellular side of the membrane. The chain crosses the membrane as a helical span at residues 314–334 (LIVVGLLNAASAGLLHYMALV). Over 335–353 (ELLAADFMGPKLQGNVRLQ) the chain is Cytoplasmic. A helical transmembrane segment spans residues 354-374 (LAAFLAVLLGAGGMSVMAKWA).

The protein belongs to the ZIP transporter (TC 2.A.5) family. As to expression, expressed in companion cells in the upper region of the root.

Its subcellular location is the cell membrane. In terms of biological role, iron transporter involved in the uptake of iron from the rhizosphere across the plasma membrane in the root epidermal layer. May also transport other divalent cations. This is Fe(2+) transport protein 1 (IRT1) from Oryza sativa subsp. japonica (Rice).